The sequence spans 540 residues: Chaperonin GroEL (540 aa).

Residues Thr30–Pro33, Asp87–Thr91, Gly414, Asn479–Leu481, and Asp495 each bind ATP.

This sequence belongs to the chaperonin (HSP60) family. Forms a cylinder of 14 subunits composed of two heptameric rings stacked back-to-back. Interacts with the co-chaperonin GroES.

The protein localises to the cytoplasm. The enzyme catalyses ATP + H2O + a folded polypeptide = ADP + phosphate + an unfolded polypeptide.. Its function is as follows. Together with its co-chaperonin GroES, plays an essential role in assisting protein folding. The GroEL-GroES system forms a nano-cage that allows encapsulation of the non-native substrate proteins and provides a physical environment optimized to promote and accelerate protein folding. This is Chaperonin GroEL from Rubrobacter xylanophilus (strain DSM 9941 / JCM 11954 / NBRC 16129 / PRD-1).